The following is a 256-amino-acid chain: Thiazole synthase (256 aa).

The Schiff-base intermediate with DXP role is filled by K102. Residues G163, 189 to 190, and 211 to 212 each bind 1-deoxy-D-xylulose 5-phosphate; these read AG and AT.

This sequence belongs to the ThiG family. In terms of assembly, homotetramer. Forms heterodimers with either ThiH or ThiS.

The protein localises to the cytoplasm. The enzyme catalyses [ThiS sulfur-carrier protein]-C-terminal-Gly-aminoethanethioate + 2-iminoacetate + 1-deoxy-D-xylulose 5-phosphate = [ThiS sulfur-carrier protein]-C-terminal Gly-Gly + 2-[(2R,5Z)-2-carboxy-4-methylthiazol-5(2H)-ylidene]ethyl phosphate + 2 H2O + H(+). It functions in the pathway cofactor biosynthesis; thiamine diphosphate biosynthesis. Its function is as follows. Catalyzes the rearrangement of 1-deoxy-D-xylulose 5-phosphate (DXP) to produce the thiazole phosphate moiety of thiamine. Sulfur is provided by the thiocarboxylate moiety of the carrier protein ThiS. In vitro, sulfur can be provided by H(2)S. The chain is Thiazole synthase from Nocardia farcinica (strain IFM 10152).